The chain runs to 350 residues: Nicotinate-nucleotide--dimethylbenzimidazole phosphoribosyltransferase (350 aa).

The active-site Proton acceptor is the Glu317.

It belongs to the CobT family.

The enzyme catalyses 5,6-dimethylbenzimidazole + nicotinate beta-D-ribonucleotide = alpha-ribazole 5'-phosphate + nicotinate + H(+). Its pathway is nucleoside biosynthesis; alpha-ribazole biosynthesis; alpha-ribazole from 5,6-dimethylbenzimidazole: step 1/2. Its function is as follows. Catalyzes the synthesis of alpha-ribazole-5'-phosphate from nicotinate mononucleotide (NAMN) and 5,6-dimethylbenzimidazole (DMB). This Shewanella sp. (strain ANA-3) protein is Nicotinate-nucleotide--dimethylbenzimidazole phosphoribosyltransferase.